Consider the following 230-residue polypeptide: IIGGQECDETGHPWLALLHRSEGSTCSGVLLNQDWIVTAAHCFYLGELRIGLGVHNRRVLRGNEQVRVSARKKCYPATASIITNSSCSEYTDDIMLIKLDSSVEYTERVRPLSLPTSPASEGAECTVMGWGTTTPPDVTYPAVPVCVRIEMLNNAVCELARDLWNITDSVLCAGTWFGGKDSCKGDSGGPLICRGQLTGIVSWGGFPCEQPLEYGVYTKVISFLFWIQSI.

One can recognise a Peptidase S1 domain in the interval 1-230 (IIGGQECDET…ISFLFWIQSI (230 aa)). 5 disulfide bridges follow: C7-C146, C26-C42, C125-C193, C157-C172, and C183-C208. H41 serves as the catalytic Charge relay system. N84 carries an N-linked (GlcNAc...) asparagine glycan. D93 serves as the catalytic Charge relay system. S187 (charge relay system) is an active-site residue.

Belongs to the peptidase S1 family. Post-translationally, extensively glycosylated, contains approximately 8 mol of monosaccharide per mol of toxin. Expressed by the mandibular venom gland.

The protein localises to the secreted. Functionally, has kallikrein-like activity, releases bradykinin from kininogen. Catalyzes the hydrolysis of various arginine ester substrates for trypsin and thrombin and degrades both angiotensin I and II by cleavage of the dipeptide Asp-Arg from the NH2-terminal end. Fibrinogen is also degraded but a fibrin clot is not produced. May have a potentiating effect on potent hemorrhagic toxins present in the venom. This chain is Gilatoxin, found in Heloderma horridum horridum (Mexican beaded lizard).